The following is a 148-amino-acid chain: Secretory phospholipase A2 (148 aa).

The signal sequence occupies residues 1–23 (MKLSVLLALGASSLAAAAPAATA). N-linked (GlcNAc...) asparagine glycosylation occurs at Asn-61. A disulfide bond links Cys-62 and Cys-78. Residue His-81 is part of the active site. Asp-82 serves as a coordination point for Ca(2+).

It belongs to the phospholipase A2 family. It depends on Ca(2+) as a cofactor.

Its subcellular location is the secreted. It catalyses the reaction a 1,2-diacyl-sn-glycero-3-phosphocholine + H2O = a 1-acyl-sn-glycero-3-phosphocholine + a fatty acid + H(+). In terms of biological role, secretory phospholipase that catalyzes the calcium-dependent hydrolysis of the 2-acyl groups in 3-sn-phosphoglycerides. Increases the ability to utilize host-derived nutrients and lipids, and promotes lipid dropplets accumulation. Plays a role in virulence. The sequence is that of Secretory phospholipase A2 from Arthroderma benhamiae (strain ATCC MYA-4681 / CBS 112371) (Trichophyton mentagrophytes).